The following is a 197-amino-acid chain: Xanthine phosphoribosyltransferase (197 aa).

Xanthine is bound by residues leucine 20 and threonine 27. 128 to 132 lines the 5-phospho-alpha-D-ribose 1-diphosphate pocket; that stretch reads ANGQA. Lysine 156 contributes to the xanthine binding site.

The protein belongs to the purine/pyrimidine phosphoribosyltransferase family. Xpt subfamily. As to quaternary structure, homodimer.

It localises to the cytoplasm. It catalyses the reaction XMP + diphosphate = xanthine + 5-phospho-alpha-D-ribose 1-diphosphate. It participates in purine metabolism; XMP biosynthesis via salvage pathway; XMP from xanthine: step 1/1. Functionally, converts the preformed base xanthine, a product of nucleic acid breakdown, to xanthosine 5'-monophosphate (XMP), so it can be reused for RNA or DNA synthesis. The polypeptide is Xanthine phosphoribosyltransferase (Lactococcus lactis subsp. cremoris (strain SK11)).